Reading from the N-terminus, the 518-residue chain is Glutamate--cysteine ligase (518 aa).

This sequence belongs to the glutamate--cysteine ligase type 1 family. Type 1 subfamily.

It catalyses the reaction L-cysteine + L-glutamate + ATP = gamma-L-glutamyl-L-cysteine + ADP + phosphate + H(+). The protein operates within sulfur metabolism; glutathione biosynthesis; glutathione from L-cysteine and L-glutamate: step 1/2. This Citrobacter koseri (strain ATCC BAA-895 / CDC 4225-83 / SGSC4696) protein is Glutamate--cysteine ligase.